Here is a 266-residue protein sequence, read N- to C-terminus: Undecaprenyl-diphosphatase (266 aa).

8 helical membrane passes run 1–21 (MNIFQTIVLALVQGLSEFLPI), 43–63 (FDVVVHMGTLSAVIFYYQAMI), 83–103 (SKLAWGVLLGTIPVGLVGMIF), 114–134 (VEIIAYATLVFGVLLGFASWF), 144–164 (TISWVDIGFIGMAQTLALIPG), 186–206 (IQFAFLLSIPVISLSLILILI), 219–239 (LLAMGFVVAAISAYVTIVFFI), and 245–265 (VGMMPFVIYRLTLGIFLFFFI).

It belongs to the UppP family.

The protein resides in the cell inner membrane. It carries out the reaction di-trans,octa-cis-undecaprenyl diphosphate + H2O = di-trans,octa-cis-undecaprenyl phosphate + phosphate + H(+). Its function is as follows. Catalyzes the dephosphorylation of undecaprenyl diphosphate (UPP). Confers resistance to bacitracin. This Ruthia magnifica subsp. Calyptogena magnifica protein is Undecaprenyl-diphosphatase.